Here is a 669-residue protein sequence, read N- to C-terminus: DNA ligase (669 aa).

NAD(+) is bound at residue 35-39; it reads DFEYD. The interval 52-71 is disordered; that stretch reads YPEWDSPDSPTHRVGSDKTE. Residues 61–71 are compositionally biased toward basic and acidic residues; that stretch reads PTHRVGSDKTE. NAD(+) contacts are provided by residues 84–85 and Glu115; that span reads SL. The N6-AMP-lysine intermediate role is filled by Lys117. Positions 138, 175, 290, and 314 each coordinate NAD(+). Residues Cys408, Cys411, Cys426, and Cys432 each contribute to the Zn(2+) site. The 80-residue stretch at 590–669 folds into the BRCT domain; it reads AVSNRLAGKT…EEEFLRLIEE (80 aa).

Belongs to the NAD-dependent DNA ligase family. LigA subfamily. Requires Mg(2+) as cofactor. Mn(2+) serves as cofactor.

The enzyme catalyses NAD(+) + (deoxyribonucleotide)n-3'-hydroxyl + 5'-phospho-(deoxyribonucleotide)m = (deoxyribonucleotide)n+m + AMP + beta-nicotinamide D-nucleotide.. In terms of biological role, DNA ligase that catalyzes the formation of phosphodiester linkages between 5'-phosphoryl and 3'-hydroxyl groups in double-stranded DNA using NAD as a coenzyme and as the energy source for the reaction. It is essential for DNA replication and repair of damaged DNA. In Porphyromonas gingivalis (strain ATCC BAA-308 / W83), this protein is DNA ligase.